The chain runs to 270 residues: tRNA pseudouridine synthase A (270 aa).

The active-site Nucleophile is the Asp-52. Tyr-110 serves as a coordination point for substrate.

This sequence belongs to the tRNA pseudouridine synthase TruA family. As to quaternary structure, homodimer.

The catalysed reaction is uridine(38/39/40) in tRNA = pseudouridine(38/39/40) in tRNA. Functionally, formation of pseudouridine at positions 38, 39 and 40 in the anticodon stem and loop of transfer RNAs. This Paraburkholderia xenovorans (strain LB400) protein is tRNA pseudouridine synthase A.